Reading from the N-terminus, the 154-residue chain is Superoxide dismutase [Cu-Zn] (154 aa).

The Cu cation site is built by H45, H47, and H62. Residues C56 and C146 are joined by a disulfide bond. The Zn(2+) site is built by H62, H70, H79, and D82. H120 provides a ligand contact to Cu cation.

This sequence belongs to the Cu-Zn superoxide dismutase family. As to quaternary structure, homodimer. It depends on Cu cation as a cofactor. Requires Zn(2+) as cofactor.

The protein localises to the cytoplasm. It carries out the reaction 2 superoxide + 2 H(+) = H2O2 + O2. Functionally, destroys radicals which are normally produced within the cells and which are toxic to biological systems. The sequence is that of Superoxide dismutase [Cu-Zn] from Bombyx mori (Silk moth).